We begin with the raw amino-acid sequence, 690 residues long: Elongation factor G (690 aa).

Residues 8-283 enclose the tr-type G domain; the sequence is EDYRNFGIMA…AVVDYLPSPV (276 aa). Residues 17-24, 81-85, and 135-138 contribute to the GTP site; these read AHIDAGKT, DTPGH, and NKMD.

It belongs to the TRAFAC class translation factor GTPase superfamily. Classic translation factor GTPase family. EF-G/EF-2 subfamily.

The protein resides in the cytoplasm. Functionally, catalyzes the GTP-dependent ribosomal translocation step during translation elongation. During this step, the ribosome changes from the pre-translocational (PRE) to the post-translocational (POST) state as the newly formed A-site-bound peptidyl-tRNA and P-site-bound deacylated tRNA move to the P and E sites, respectively. Catalyzes the coordinated movement of the two tRNA molecules, the mRNA and conformational changes in the ribosome. In Rhodopseudomonas palustris (strain BisB5), this protein is Elongation factor G.